A 473-amino-acid polypeptide reads, in one-letter code: L-seryl-tRNA(Sec) selenium transferase (473 aa).

The residue at position 302 (lysine 302) is an N6-(pyridoxal phosphate)lysine.

It belongs to the SelA family. Pyridoxal 5'-phosphate is required as a cofactor.

It localises to the cytoplasm. It catalyses the reaction L-seryl-tRNA(Sec) + selenophosphate + H(+) = L-selenocysteinyl-tRNA(Sec) + phosphate. It functions in the pathway aminoacyl-tRNA biosynthesis; selenocysteinyl-tRNA(Sec) biosynthesis; selenocysteinyl-tRNA(Sec) from L-seryl-tRNA(Sec) (bacterial route): step 1/1. Converts seryl-tRNA(Sec) to selenocysteinyl-tRNA(Sec) required for selenoprotein biosynthesis. The chain is L-seryl-tRNA(Sec) selenium transferase from Shewanella oneidensis (strain ATCC 700550 / JCM 31522 / CIP 106686 / LMG 19005 / NCIMB 14063 / MR-1).